A 544-amino-acid chain; its full sequence is Putative ankyrin repeat protein L289 (544 aa).

ANK repeat units lie at residues 31 to 71, 72 to 105, 110 to 143, 147 to 181, 185 to 218, 222 to 255, 259 to 297, 300 to 339, 340 to 374, 378 to 413, and 414 to 447; these read KNFS…AQNE, HGWT…DPNI, YSQT…DINH, LGVS…DINS, QGNT…DPNI, KGTT…NINF, YNET…DIPI, DKLS…IQCS, NGKT…NPNI, QGKT…TIDN, and TGQS…CVNK.

The sequence is that of Putative ankyrin repeat protein L289 from Acanthamoeba polyphaga mimivirus (APMV).